We begin with the raw amino-acid sequence, 353 residues long: Nicotinate-nucleotide--dimethylbenzimidazole phosphoribosyltransferase (353 aa).

E319 serves as the catalytic Proton acceptor.

It belongs to the CobT family.

It carries out the reaction 5,6-dimethylbenzimidazole + nicotinate beta-D-ribonucleotide = alpha-ribazole 5'-phosphate + nicotinate + H(+). It participates in nucleoside biosynthesis; alpha-ribazole biosynthesis; alpha-ribazole from 5,6-dimethylbenzimidazole: step 1/2. In terms of biological role, catalyzes the synthesis of alpha-ribazole-5'-phosphate from nicotinate mononucleotide (NAMN) and 5,6-dimethylbenzimidazole (DMB). This Prosthecochloris aestuarii (strain DSM 271 / SK 413) protein is Nicotinate-nucleotide--dimethylbenzimidazole phosphoribosyltransferase.